The sequence spans 338 residues: Holliday junction branch migration complex subunit RuvB (338 aa).

Residues 1–179 (MTDLTTPIRT…FGIPVRLNFY (179 aa)) are large ATPase domain (RuvB-L). ATP contacts are provided by Leu-18, Arg-19, Gly-60, Lys-63, Thr-64, Thr-65, Arg-169, Tyr-179, and Arg-216. Position 64 (Thr-64) interacts with Mg(2+). A small ATPAse domain (RuvB-S) region spans residues 180-250 (THAELEQVIG…AADAALNRLE (71 aa)). The interval 253–338 (ALGLDAMDRR…AGSQDGLFDK (86 aa)) is head domain (RuvB-H). Residues Arg-289, Arg-308, and Arg-313 each coordinate DNA.

Belongs to the RuvB family. In terms of assembly, homohexamer. Forms an RuvA(8)-RuvB(12)-Holliday junction (HJ) complex. HJ DNA is sandwiched between 2 RuvA tetramers; dsDNA enters through RuvA and exits via RuvB. An RuvB hexamer assembles on each DNA strand where it exits the tetramer. Each RuvB hexamer is contacted by two RuvA subunits (via domain III) on 2 adjacent RuvB subunits; this complex drives branch migration. In the full resolvosome a probable DNA-RuvA(4)-RuvB(12)-RuvC(2) complex forms which resolves the HJ.

It is found in the cytoplasm. The enzyme catalyses ATP + H2O = ADP + phosphate + H(+). Its function is as follows. The RuvA-RuvB-RuvC complex processes Holliday junction (HJ) DNA during genetic recombination and DNA repair, while the RuvA-RuvB complex plays an important role in the rescue of blocked DNA replication forks via replication fork reversal (RFR). RuvA specifically binds to HJ cruciform DNA, conferring on it an open structure. The RuvB hexamer acts as an ATP-dependent pump, pulling dsDNA into and through the RuvAB complex. RuvB forms 2 homohexamers on either side of HJ DNA bound by 1 or 2 RuvA tetramers; 4 subunits per hexamer contact DNA at a time. Coordinated motions by a converter formed by DNA-disengaged RuvB subunits stimulates ATP hydrolysis and nucleotide exchange. Immobilization of the converter enables RuvB to convert the ATP-contained energy into a lever motion, pulling 2 nucleotides of DNA out of the RuvA tetramer per ATP hydrolyzed, thus driving DNA branch migration. The RuvB motors rotate together with the DNA substrate, which together with the progressing nucleotide cycle form the mechanistic basis for DNA recombination by continuous HJ branch migration. Branch migration allows RuvC to scan DNA until it finds its consensus sequence, where it cleaves and resolves cruciform DNA. This is Holliday junction branch migration complex subunit RuvB from Sphingopyxis alaskensis (strain DSM 13593 / LMG 18877 / RB2256) (Sphingomonas alaskensis).